A 328-amino-acid polypeptide reads, in one-letter code: DNA-directed RNA polymerase subunit alpha (328 aa).

An alpha N-terminal domain (alpha-NTD) region spans residues 1-234 (MVREKVKVST…DLFIPFLQAE (234 aa)). Residues 268–328 (IALKSIFIDQ…KQIMSILEKK (61 aa)) form an alpha C-terminal domain (alpha-CTD) region.

The protein belongs to the RNA polymerase alpha chain family. As to quaternary structure, in plastids the minimal PEP RNA polymerase catalytic core is composed of four subunits: alpha, beta, beta', and beta''. When a (nuclear-encoded) sigma factor is associated with the core the holoenzyme is formed, which can initiate transcription.

The protein resides in the plastid. It localises to the chloroplast. The enzyme catalyses RNA(n) + a ribonucleoside 5'-triphosphate = RNA(n+1) + diphosphate. Its function is as follows. DNA-dependent RNA polymerase catalyzes the transcription of DNA into RNA using the four ribonucleoside triphosphates as substrates. This chain is DNA-directed RNA polymerase subunit alpha, found in Citrus sinensis (Sweet orange).